The sequence spans 203 residues: Small ribosomal subunit protein uS4 (203 aa).

One can recognise an S4 RNA-binding domain in the interval 93 to 154 (RRFDNVVYRC…KSRNLDAVAD (62 aa)).

The protein belongs to the universal ribosomal protein uS4 family. Part of the 30S ribosomal subunit. Contacts protein S5. The interaction surface between S4 and S5 is involved in control of translational fidelity.

Its function is as follows. One of the primary rRNA binding proteins, it binds directly to 16S rRNA where it nucleates assembly of the body of the 30S subunit. Functionally, with S5 and S12 plays an important role in translational accuracy. This is Small ribosomal subunit protein uS4 from Chlorobaculum parvum (strain DSM 263 / NCIMB 8327) (Chlorobium vibrioforme subsp. thiosulfatophilum).